The chain runs to 209 residues: Redox-sensing transcriptional repressor Rex (209 aa).

The segment at residues 16 to 55 is a DNA-binding region (H-T-H motif); that stretch reads LYYRFIQNLSLSGKQRVSSAELSEAVKVDSATIRRDFSYF. 90-95 is a binding site for NAD(+); the sequence is GVGNLG.

The protein belongs to the transcriptional regulatory Rex family. Homodimer.

It is found in the cytoplasm. Functionally, modulates transcription in response to changes in cellular NADH/NAD(+) redox state. This is Redox-sensing transcriptional repressor Rex from Bacillus mycoides (strain KBAB4) (Bacillus weihenstephanensis).